The chain runs to 351 residues: sn-glycerol-3-phosphate import ATP-binding protein UgpC (351 aa).

An ABC transporter domain is found at 4-235 (IVLDNVRKSY…PASTFVATFI (232 aa)). 37–44 (GPSGCGKS) serves as a coordination point for ATP.

The protein belongs to the ABC transporter superfamily. sn-glycerol-3-phosphate importer (TC 3.A.1.1.3) family. As to quaternary structure, the complex is composed of two ATP-binding proteins (UgpC), two transmembrane proteins (UgpA and UgpE) and a solute-binding protein (UgpB).

The protein resides in the cell inner membrane. The enzyme catalyses sn-glycerol 3-phosphate(out) + ATP + H2O = sn-glycerol 3-phosphate(in) + ADP + phosphate + H(+). Part of the ABC transporter complex UgpBAEC involved in sn-glycerol-3-phosphate (G3P) import. Responsible for energy coupling to the transport system. The polypeptide is sn-glycerol-3-phosphate import ATP-binding protein UgpC (Brucella abortus biovar 1 (strain 9-941)).